A 199-amino-acid polypeptide reads, in one-letter code: Recombination protein RecR (199 aa).

The C4-type zinc-finger motif lies at 58–73 (CKKCFNFTSEDECEIC). A Toprim domain is found at 81-175 (KLICVVAETK…KVTRIAYGLP (95 aa)).

The protein belongs to the RecR family.

In terms of biological role, may play a role in DNA repair. It seems to be involved in an RecBC-independent recombinational process of DNA repair. It may act with RecF and RecO. This Prochlorococcus marinus (strain MIT 9312) protein is Recombination protein RecR.